Consider the following 551-residue polypeptide: Interleukin-2 receptor subunit beta (551 aa).

The first 26 residues, 1 to 26 (MATLALSWCLPLLILLLPLATSSASA), serve as a signal peptide directing secretion. The Extracellular portion of the chain corresponds to 27–240 (AVNGTSRFTC…TKPAALGKDT (214 aa)). N29, N43, and N71 each carry an N-linked (GlcNAc...) asparagine glycan. C36 and C46 are disulfide-bonded. C74 and C86 are oxidised to a cystine. Residues 134–234 (APISLQVVHV…QPLAFRTKPA (101 aa)) form the Fibronectin type-III domain. An N-linked (GlcNAc...) asparagine glycan is attached at N149. Positions 220 to 224 (WSPWS) match the WSXWS motif motif. A helical membrane pass occupies residues 241-265 (IPWLGHLLVGLSGAFGFIILVYLLI). The Cytoplasmic portion of the chain corresponds to 266–551 (NCRNTGPWLK…LQDQDPTHLV (286 aa)). The Box 1 motif motif lies at 278–286 (LKCHTPDPS). Disordered regions lie at residues 389-417 (EEEP…EDDA), 430-484 (FSPS…DLVD), and 496-517 (AGEQ…ARPP).

Belongs to the type I cytokine receptor family. Type 4 subfamily. Non-covalent dimer of an alpha and a beta subunit. IL2R exists in 3 different forms: a high affinity dimer, an intermediate affinity monomer (beta subunit), and a low affinity monomer (alpha subunit). The high and intermediate affinity forms also associate with a gamma subunit. Interacts with SHB upon interleukin stimulation.

The protein resides in the cell membrane. It localises to the cell surface. In terms of biological role, receptor for interleukin-2. This beta subunit is involved in receptor mediated endocytosis and transduces the mitogenic signals of IL2. Probably in association with IL15RA, involved in the stimulation of neutrophil phagocytosis by IL15. This chain is Interleukin-2 receptor subunit beta (IL2RB), found in Macaca fascicularis (Crab-eating macaque).